The chain runs to 232 residues: Glutathione S-transferase E14 (232 aa).

Residues 4-85 (PKPILYYDER…HLAEKFDEGG (82 aa)) form the GST N-terminal domain. One can recognise a GST C-terminal domain in the interval 91-218 (EHAERMKVLN…RQTMESVGSF (128 aa)).

This sequence belongs to the GST superfamily. Epsilon family. Expressed in the adult ovary (at protein level).

It catalyses the reaction RX + glutathione = an S-substituted glutathione + a halide anion + H(+). In terms of biological role, conjugation of reduced glutathione to a wide number of exogenous and endogenous hydrophobic electrophiles. Essential for ecdysteroid biosynthesis. May be involved in detoxification. This chain is Glutathione S-transferase E14, found in Drosophila melanogaster (Fruit fly).